The chain runs to 127 residues: Large ribosomal subunit protein bL20 (127 aa).

This sequence belongs to the bacterial ribosomal protein bL20 family.

Its function is as follows. Binds directly to 23S ribosomal RNA and is necessary for the in vitro assembly process of the 50S ribosomal subunit. It is not involved in the protein synthesizing functions of that subunit. The chain is Large ribosomal subunit protein bL20 (rplT) from Mycoplasma pneumoniae (strain ATCC 29342 / M129 / Subtype 1) (Mycoplasmoides pneumoniae).